A 284-amino-acid polypeptide reads, in one-letter code: NH(3)-dependent NAD(+) synthetase (284 aa).

51–58 lines the ATP pocket; that stretch reads GISGGIDS. D57 serves as a coordination point for Mg(2+). R148 is a deamido-NAD(+) binding site. ATP is bound at residue T168. Residue E173 participates in Mg(2+) binding. Positions 181 and 188 each coordinate deamido-NAD(+). Residues K197 and T219 each coordinate ATP. 268–269 contributes to the deamido-NAD(+) binding site; it reads HK.

This sequence belongs to the NAD synthetase family. Homodimer.

The catalysed reaction is deamido-NAD(+) + NH4(+) + ATP = AMP + diphosphate + NAD(+) + H(+). It participates in cofactor biosynthesis; NAD(+) biosynthesis; NAD(+) from deamido-NAD(+) (ammonia route): step 1/1. Its function is as follows. Catalyzes the ATP-dependent amidation of deamido-NAD to form NAD. Uses ammonia as a nitrogen source. The protein is NH(3)-dependent NAD(+) synthetase of Burkholderia pseudomallei (strain 1106a).